We begin with the raw amino-acid sequence, 361 residues long: MTQPAFFKQPPPLTLVEIAASTGAQLIDASRGEQRITGLASLDQAGPMHLTFFDNHKYAAQLAATRAGACFVSPRFEASVPGHVAVLRSAAPFRAFVRIARDCHADTLRPQSWFDNATIAASAVVHPSAHLEDAVVVDPLAVIGPGVEIGTGSVIGSGAVIGPGVRIGRNCNVGAGTTIQVALIGNNVLIHPGCHIGQDGYGFIFFGSEGHVKVPQTGRVLIQNDVEIGAGTTIDRGSLRDTVIGEGTKIDNQVQIGHNVTIGRRCLLAAQIGLAGSLTIGDNVALGAKVGINNHLHIGDGAQVVAMSGVKDDIPPNGRWGGYFAKPTRQWYRELFAVERLARDGAPNAGSATPDPTDRGA.

The Proton acceptor role is filled by His-258.

This sequence belongs to the transferase hexapeptide repeat family. LpxD subfamily. Homotrimer.

The enzyme catalyses a UDP-3-O-[(3R)-3-hydroxyacyl]-alpha-D-glucosamine + a (3R)-hydroxyacyl-[ACP] = a UDP-2-N,3-O-bis[(3R)-3-hydroxyacyl]-alpha-D-glucosamine + holo-[ACP] + H(+). Its pathway is bacterial outer membrane biogenesis; LPS lipid A biosynthesis. Catalyzes the N-acylation of UDP-3-O-acylglucosamine using 3-hydroxyacyl-ACP as the acyl donor. Is involved in the biosynthesis of lipid A, a phosphorylated glycolipid that anchors the lipopolysaccharide to the outer membrane of the cell. The chain is UDP-3-O-acylglucosamine N-acyltransferase from Nitrobacter hamburgensis (strain DSM 10229 / NCIMB 13809 / X14).